A 550-amino-acid chain; its full sequence is Dihydroxy-acid dehydratase (550 aa).

Aspartate 78 is a binding site for Mg(2+). Cysteine 119 serves as a coordination point for [2Fe-2S] cluster. Mg(2+)-binding residues include aspartate 120 and lysine 121. Lysine 121 bears the N6-carboxylysine mark. Cysteine 191 contacts [2Fe-2S] cluster. A Mg(2+)-binding site is contributed by glutamate 440. Serine 466 (proton acceptor) is an active-site residue.

It belongs to the IlvD/Edd family. Homodimer. The cofactor is [2Fe-2S] cluster. Mg(2+) is required as a cofactor.

The catalysed reaction is (2R)-2,3-dihydroxy-3-methylbutanoate = 3-methyl-2-oxobutanoate + H2O. The enzyme catalyses (2R,3R)-2,3-dihydroxy-3-methylpentanoate = (S)-3-methyl-2-oxopentanoate + H2O. Its pathway is amino-acid biosynthesis; L-isoleucine biosynthesis; L-isoleucine from 2-oxobutanoate: step 3/4. The protein operates within amino-acid biosynthesis; L-valine biosynthesis; L-valine from pyruvate: step 3/4. Functionally, functions in the biosynthesis of branched-chain amino acids. Catalyzes the dehydration of (2R,3R)-2,3-dihydroxy-3-methylpentanoate (2,3-dihydroxy-3-methylvalerate) into 2-oxo-3-methylpentanoate (2-oxo-3-methylvalerate) and of (2R)-2,3-dihydroxy-3-methylbutanoate (2,3-dihydroxyisovalerate) into 2-oxo-3-methylbutanoate (2-oxoisovalerate), the penultimate precursor to L-isoleucine and L-valine, respectively. The polypeptide is Dihydroxy-acid dehydratase (Methanococcus maripaludis (strain DSM 14266 / JCM 13030 / NBRC 101832 / S2 / LL)).